A 384-amino-acid polypeptide reads, in one-letter code: Spermidine/putrescine import ATP-binding protein PotA (384 aa).

The 233-residue stretch at 6–238 folds into the ABC transporter domain; it reads IAFQNVSKVF…PINHFVATFI (233 aa). 40 to 47 is an ATP binding site; the sequence is GASGSGKS.

The protein belongs to the ABC transporter superfamily. Spermidine/putrescine importer (TC 3.A.1.11.1) family. In terms of assembly, the complex is composed of two ATP-binding proteins (PotA), two transmembrane proteins (PotB and PotC) and a solute-binding protein (PotD).

Its subcellular location is the cell membrane. The catalysed reaction is ATP + H2O + polyamine-[polyamine-binding protein]Side 1 = ADP + phosphate + polyamineSide 2 + [polyamine-binding protein]Side 1.. Its function is as follows. Part of the ABC transporter complex PotABCD involved in spermidine/putrescine import. Responsible for energy coupling to the transport system. In Streptococcus thermophilus (strain ATCC BAA-491 / LMD-9), this protein is Spermidine/putrescine import ATP-binding protein PotA.